Consider the following 1191-residue polypeptide: DNA-directed RNA polymerase subunit beta (1191 aa).

The segment covering 1171–1181 (RVKQEAEEKQA) has biased composition (basic and acidic residues). Positions 1171 to 1191 (RVKQEAEEKQAEQVSEVVQED) are disordered. Positions 1182 to 1191 (EQVSEVVQED) are enriched in low complexity.

The protein belongs to the RNA polymerase beta chain family. As to quaternary structure, the RNAP catalytic core consists of 2 alpha, 1 beta, 1 beta' and 1 omega subunit. When a sigma factor is associated with the core the holoenzyme is formed, which can initiate transcription.

The catalysed reaction is RNA(n) + a ribonucleoside 5'-triphosphate = RNA(n+1) + diphosphate. Its function is as follows. DNA-dependent RNA polymerase catalyzes the transcription of DNA into RNA using the four ribonucleoside triphosphates as substrates. The protein is DNA-directed RNA polymerase subunit beta of Streptococcus agalactiae serotype Ia (strain ATCC 27591 / A909 / CDC SS700).